The chain runs to 291 residues: MESHEGIDVVLVTGLSGAGRGTAAKVLEDLGWYVADNLPPELIARMVDLGLAAGSRITQLAVVMDVRSKGFTGDLDWVRNELATRNIAPRVLFMEASDDILVRRYEQNRRSHPLQGTQTLAEGIAAERAMLAPVRAAADLVIDTSTLPVPALRESIERAFGGETVAYTNVTVESFGYKYGLPMDADTVMDVRFLPNPHWVDELRPHSGQHPDVRDYVLGQPGALEFLDTYHRLLDVVIDGYRREGKRYMTVAIGCTGGKHRSVAIAEALAERLEGGDGLTVRVLHRDLGRE.

14-21 (GLSGAGRG) contacts ATP. 65–68 (DVRS) serves as a coordination point for GTP.

This sequence belongs to the RapZ-like family.

Its function is as follows. Displays ATPase and GTPase activities. The chain is Nucleotide-binding protein MSMEG_3079/MSMEI_3001 from Mycolicibacterium smegmatis (strain ATCC 700084 / mc(2)155) (Mycobacterium smegmatis).